The primary structure comprises 140 residues: Organic hydroperoxide resistance protein-like (140 aa).

The protein belongs to the OsmC/Ohr family.

In Staphylococcus aureus (strain MRSA252), this protein is Organic hydroperoxide resistance protein-like.